The primary structure comprises 194 residues: MKQRDGFLGGQLLIAMPGMNDNRFIRSVVYVCAHSDAGAMGIILNQLHHIDFPELLLHLGVISGVQKKHLSEPIKNFPVRYGGPVDPLRGFVLHSDDYTCKETVLVAEKICFTATIDILKAISCEQGPQHALIALGYAGWKPGQLETEISTNGWLISPTSPSFLFESDLSRKYDESLIRMGINPTYLVSEMGHA.

This sequence belongs to the UPF0301 (AlgH) family.

This is UPF0301 protein BQ03640 from Bartonella quintana (strain Toulouse) (Rochalimaea quintana).